Reading from the N-terminus, the 464-residue chain is 3-isopropylmalate dehydratase large subunit (464 aa).

Residues Cys-345, Cys-405, and Cys-408 each contribute to the [4Fe-4S] cluster site.

This sequence belongs to the aconitase/IPM isomerase family. LeuC type 1 subfamily. As to quaternary structure, heterodimer of LeuC and LeuD. It depends on [4Fe-4S] cluster as a cofactor.

The catalysed reaction is (2R,3S)-3-isopropylmalate = (2S)-2-isopropylmalate. It participates in amino-acid biosynthesis; L-leucine biosynthesis; L-leucine from 3-methyl-2-oxobutanoate: step 2/4. Its function is as follows. Catalyzes the isomerization between 2-isopropylmalate and 3-isopropylmalate, via the formation of 2-isopropylmaleate. In Bacteroides thetaiotaomicron (strain ATCC 29148 / DSM 2079 / JCM 5827 / CCUG 10774 / NCTC 10582 / VPI-5482 / E50), this protein is 3-isopropylmalate dehydratase large subunit.